Consider the following 51-residue polypeptide: MFRIEGLAPKLDPEEMKRKMREDVISSIRNFLIYVALLRVTPFILKKLDSI.

Residue Met-1 is modified to N-acetylmethionine. Lys-10 participates in a covalent cross-link: Glycyl lysine isopeptide (Lys-Gly) (interchain with G-Cter in SUMO2). A helical transmembrane segment spans residues 27–45 (SIRNFLIYVALLRVTPFIL).

It belongs to the Tom5 family. Forms part of the preprotein translocase complex of the outer mitochondrial membrane (TOM complex) which consists of at least 7 different proteins (TOMM5, TOMM6, TOMM7, TOMM20, TOMM22, TOMM40 and TOMM70).

It localises to the mitochondrion outer membrane. In Bos taurus (Bovine), this protein is Mitochondrial import receptor subunit TOM5 homolog.